A 558-amino-acid chain; its full sequence is MAGPLPPLNQEAAFQKLQEYYDSSGKDLNIKDLFVKDAKRFSKYSLRLHTQNDGEILLDYSKNRINDEVWDLLLALAKVRRVDAARDAMFSGQHINITENRAVLHTALRNRGTDPVLVDDKDVMPDVRAELAHMKEFTNMVISGVWRGCTGKQITDVVNIGIGGSDLGPLMVTEALKPYGKGLHSHFVSNIDGTHLAEVLKKVNYETTLFIVASKTFTTQETITNATSAKTWLLEHSKEPESVAKHFVALSTNKEKVTEFGIDSTNMFGFWDWVGGRYSLWSAIGLSICLSIGFENFEQLLDGAHYMDNHFRTTPLEKNAPVILALLGVWYSNFFKAETHALLPYDQYLHRFAAYFQQGDMESNGKFVSKAGKAVKYSTGPIVWGEPGTNGQHAFYQLIHQGTRLIPCDFIAPAQTHNPIAGGKHHKILLSNFLAQTEALMAGKTVDEARAELSKAGLCGNELDNLLPHKVFVGNRPTNSIVVKKVSPFTLGALIALYEHKIFVQGIIWDINSFDQWGVELGKQLAKAIEPELDHCNEVSTHDSSTNGLINFIKANWK.

The Proton donor role is filled by glutamate 362. Active-site residues include histidine 393 and lysine 523.

It belongs to the GPI family.

Its subcellular location is the cytoplasm. It carries out the reaction alpha-D-glucose 6-phosphate = beta-D-fructose 6-phosphate. It participates in carbohydrate degradation; glycolysis; D-glyceraldehyde 3-phosphate and glycerone phosphate from D-glucose: step 2/4. In Drosophila yakuba (Fruit fly), this protein is Glucose-6-phosphate isomerase (Pgi).